A 245-amino-acid polypeptide reads, in one-letter code: 1-(5-phosphoribosyl)-5-[(5-phosphoribosylamino)methylideneamino] imidazole-4-carboxamide isomerase (245 aa).

Aspartate 7 (proton acceptor) is an active-site residue. The active-site Proton donor is the aspartate 129.

The protein belongs to the HisA/HisF family.

Its subcellular location is the cytoplasm. It catalyses the reaction 1-(5-phospho-beta-D-ribosyl)-5-[(5-phospho-beta-D-ribosylamino)methylideneamino]imidazole-4-carboxamide = 5-[(5-phospho-1-deoxy-D-ribulos-1-ylimino)methylamino]-1-(5-phospho-beta-D-ribosyl)imidazole-4-carboxamide. Its pathway is amino-acid biosynthesis; L-histidine biosynthesis; L-histidine from 5-phospho-alpha-D-ribose 1-diphosphate: step 4/9. The sequence is that of 1-(5-phosphoribosyl)-5-[(5-phosphoribosylamino)methylideneamino] imidazole-4-carboxamide isomerase from Escherichia coli (strain 55989 / EAEC).